We begin with the raw amino-acid sequence, 439 residues long: Methylenetetrahydrofolate--tRNA-(uracil-5-)-methyltransferase TrmFO (439 aa).

9–14 (GAGLAG) lines the FAD pocket.

It belongs to the MnmG family. TrmFO subfamily. FAD is required as a cofactor.

It localises to the cytoplasm. The catalysed reaction is uridine(54) in tRNA + (6R)-5,10-methylene-5,6,7,8-tetrahydrofolate + NADH + H(+) = 5-methyluridine(54) in tRNA + (6S)-5,6,7,8-tetrahydrofolate + NAD(+). It carries out the reaction uridine(54) in tRNA + (6R)-5,10-methylene-5,6,7,8-tetrahydrofolate + NADPH + H(+) = 5-methyluridine(54) in tRNA + (6S)-5,6,7,8-tetrahydrofolate + NADP(+). Functionally, catalyzes the folate-dependent formation of 5-methyl-uridine at position 54 (M-5-U54) in all tRNAs. The sequence is that of Methylenetetrahydrofolate--tRNA-(uracil-5-)-methyltransferase TrmFO from Lactobacillus delbrueckii subsp. bulgaricus (strain ATCC BAA-365 / Lb-18).